The primary structure comprises 409 residues: Astacin-like metalloendopeptidase (409 aa).

A signal peptide spans 1-19 (MDLKMLLIFIAFLLPSVLG). Positions 30–39 (TATTESTQVT) are enriched in low complexity. The tract at residues 30 to 54 (TATTESTQVTTEEDIYDSPSPAETD) is disordered. The 199-residue stretch at 87 to 285 (SAINCRNCYW…AKINRLYNCS (199 aa)) folds into the Peptidase M12A domain. Intrachain disulfides connect Cys-91/Cys-94, Cys-134/Cys-284, Cys-155/Cys-175, Cys-287/Cys-313, and Cys-339/Cys-362. His-183 contacts Zn(2+). Glu-184 is a catalytic residue. 2 residues coordinate Zn(2+): His-187 and His-193. The CUB domain occupies 287 to 399 (CSTIIDAAFG…SGFQATFTSA (113 aa)).

Zn(2+) serves as cofactor. As to expression, expressed in ovary and gonads.

It is found in the cytoplasm. It localises to the cell membrane. The protein localises to the cytoplasmic vesicle. Its subcellular location is the secretory vesicle. The protein resides in the cortical granule. Probable oocyte-specific oolemmal receptor involved in sperm and egg adhesion and fertilization. May act as a protease. The protein is Astacin-like metalloendopeptidase (ASTL) of Gallus gallus (Chicken).